Reading from the N-terminus, the 190-residue chain is Peptidyl-tRNA hydrolase (190 aa).

Y14 serves as a coordination point for tRNA. H19 (proton acceptor) is an active-site residue. TRNA contacts are provided by Y64, N66, and N112.

Belongs to the PTH family. In terms of assembly, monomer.

Its subcellular location is the cytoplasm. The enzyme catalyses an N-acyl-L-alpha-aminoacyl-tRNA + H2O = an N-acyl-L-amino acid + a tRNA + H(+). Its function is as follows. Hydrolyzes ribosome-free peptidyl-tRNAs (with 1 or more amino acids incorporated), which drop off the ribosome during protein synthesis, or as a result of ribosome stalling. Functionally, catalyzes the release of premature peptidyl moieties from peptidyl-tRNA molecules trapped in stalled 50S ribosomal subunits, and thus maintains levels of free tRNAs and 50S ribosomes. The polypeptide is Peptidyl-tRNA hydrolase (Pelodictyon phaeoclathratiforme (strain DSM 5477 / BU-1)).